The primary structure comprises 688 residues: Glycine--tRNA ligase beta subunit (688 aa).

Belongs to the class-II aminoacyl-tRNA synthetase family. As to quaternary structure, tetramer of two alpha and two beta subunits.

The protein localises to the cytoplasm. The catalysed reaction is tRNA(Gly) + glycine + ATP = glycyl-tRNA(Gly) + AMP + diphosphate. The polypeptide is Glycine--tRNA ligase beta subunit (Chromohalobacter salexigens (strain ATCC BAA-138 / DSM 3043 / CIP 106854 / NCIMB 13768 / 1H11)).